Reading from the N-terminus, the 337-residue chain is Adenylosuccinate synthetase (337 aa).

GTP-binding positions include 12–18 and 42–44; these read GDEGKGK and GHT. Catalysis depends on aspartate 13, which acts as the Proton acceptor. Mg(2+)-binding residues include aspartate 13 and glycine 42. IMP contacts are provided by residues 13–16, 40–43, threonine 127, arginine 141, glutamine 179, threonine 194, and arginine 256; these read DEGK and NAGH. The active-site Proton donor is histidine 43. Residue 252 to 258 participates in substrate binding; the sequence is TVTGRRR. GTP is bound by residues arginine 258, 284–286, and 324–326; these read CLD and STG.

The protein belongs to the adenylosuccinate synthetase family. Homodimer. Mg(2+) is required as a cofactor.

Its subcellular location is the cytoplasm. It catalyses the reaction IMP + L-aspartate + GTP = N(6)-(1,2-dicarboxyethyl)-AMP + GDP + phosphate + 2 H(+). The protein operates within purine metabolism; AMP biosynthesis via de novo pathway; AMP from IMP: step 1/2. Its function is as follows. Plays an important role in the de novo pathway of purine nucleotide biosynthesis. Catalyzes the first committed step in the biosynthesis of AMP from IMP. The sequence is that of Adenylosuccinate synthetase from Methanococcus maripaludis (strain C5 / ATCC BAA-1333).